The following is a 354-amino-acid chain: MKSKLRVGLVCGGCSLEHEVSLKSAIYIMKYINKRFFEVVVLWISKQGDWYIVENDDMHIDFFVNKENLHKCMPILMFSSGNRCFEYINNILSLDVIFPIIHGALGEDGSLQGLLRLMNLPYVGSDVLGSAICMDKDITKRLLRDSGLSITPFRTFLAHEKKKLKFLNFADMFGLPFFVKPVNQGSSIGVAKVNDDYSFHSALDIAFFYSHKIIIESCIAGRELECAVLGNNENPITSVCGEIIKKNDDFYTYCDKYVDHNSEIVIPAVLEKSVSSKIRSIAIRVFQILNCFGMARVDIFLFGKDRIIINEVNTLPGFTSDSMYLKLWQATGINISTLLTRLIMLALDRYYKYN.

Positions 140-344 constitute an ATP-grasp domain; that stretch reads KRLLRDSGLS…ISTLLTRLIM (205 aa). 170 to 225 serves as a coordination point for ATP; the sequence is ADMFGLPFFVKPVNQGSSIGVAKVNDDYSFHSALDIAFFYSHKIIIESCIAGRELE. Asp298, Glu311, and Asn313 together coordinate Mg(2+).

This sequence belongs to the D-alanine--D-alanine ligase family. Mg(2+) is required as a cofactor. It depends on Mn(2+) as a cofactor.

The protein resides in the cytoplasm. The enzyme catalyses 2 D-alanine + ATP = D-alanyl-D-alanine + ADP + phosphate + H(+). It participates in cell wall biogenesis; peptidoglycan biosynthesis. Functionally, cell wall formation. In Blochmanniella floridana, this protein is D-alanine--D-alanine ligase.